The chain runs to 894 residues: MLPRPSSRFLSTQRGPGRAVKKLIAIGEKWKQKTTRGPPKQGTLNNRSKYILCQFPYPSGVLHIGHLRVYVISDSLNRFYKQRGYNVIHPMGWDAFGLPAENAAIERGINPAIWTRDNIAKMKQQMESMLANFDWDREVTTCDPEYYKFTQWIFLKLFENGLAYRKEAEINWDPVDKTVLANEQVDAQGRSWRSGAIVEKKQLKQWFLGITKFAPKLRKHLNQLKDWPSNVKQMQKNWIGESIGAELVFKVADSKFENLIVFTTRPETLFAVQYVALALDHPIVQKYSEVIPDLKEFLQKSDQLPSDTKEGFRLPDIKAVNPLTKEELPIFAAPYVISSYGTAPSAVMGCPGHDSRDFEFWQQNCPGEHIKTCIAPFFDDASKTSEKERQKIIDTVPFTSADGILTKESGEYSGVFTAVARKSIMGKLHSKGLSKNIIRYRIRDWLISRQRYWGTPIPIIHCDNCGPVPVPESDLPVKLPELKGLDTKGNPLSTIDEFVNVACPSCGSPAKRETDTMDTFIDSSWYYFRFLDPKNTSKPFDREIASEHMPVDIYIGGVEHAILHLLYSRFIAKFLGSINAWDDPTGIFEPFRKLVTQGMVQGKTYVDPDSGKFLTPDELTFVKDPSDGNTTIIKSNGKIPMVSYEKMSKSKHNGADPNECILRHGADATRAHILFQSPIADALNWDESKIVGIERWLQKVLCLTKNILGLEKNLAISKDYKTPTDLNDAEVKFHNDFQRFLKSITESFEVHLSLNTVISDYMKLTNLLESALKKSEVRKEMMVQNLQKLVTIIYPAVPSISEEAAELISSQMEWNQYRWPEVERTTESKFKKFQIVVNGRVKFMYTADKDFLKSGRDAVIETLLKLPEGRMYLMNKKIKKFVMKYNVISFLFHK.

The transit peptide at 1-9 (MLPRPSSRF) directs the protein to the mitochondrion. A 'HIGH' region motif is present at residues 56–66 (PYPSGVLHIGH). Residues 646-650 (KMSKS) carry the 'KMSKS' region motif. ATP is bound at residue lysine 649.

Belongs to the class-I aminoacyl-tRNA synthetase family.

The protein resides in the mitochondrion matrix. It carries out the reaction tRNA(Leu) + L-leucine + ATP = L-leucyl-tRNA(Leu) + AMP + diphosphate. This chain is Leucine--tRNA ligase, mitochondrial (NAM2), found in Saccharomyces paradoxus (Yeast).